The sequence spans 311 residues: Malate dehydrogenase (311 aa).

NAD(+) is bound by residues 7–13 (GAAGGIG) and D34. R81 and R87 together coordinate substrate. NAD(+)-binding positions include N94 and 117-119 (ITN). Substrate is bound by residues N119 and R153. H177 (proton acceptor) is an active-site residue. An NAD(+)-binding site is contributed by M227.

This sequence belongs to the LDH/MDH superfamily. MDH type 1 family. In terms of assembly, homodimer.

It catalyses the reaction (S)-malate + NAD(+) = oxaloacetate + NADH + H(+). Its function is as follows. Catalyzes the reversible oxidation of malate to oxaloacetate. In Vibrio parahaemolyticus serotype O3:K6 (strain RIMD 2210633), this protein is Malate dehydrogenase.